The sequence spans 348 residues: Thioredoxin-related protein DsbJ (348 aa).

The N-terminal stretch at 1–32 is a signal peptide; the sequence is MILLQNIKRCSLKQLKVLATLLLSLSLPTLEA.

The protein resides in the periplasm. This is Thioredoxin-related protein DsbJ (dsbJ) from Chlamydia pneumoniae (Chlamydophila pneumoniae).